We begin with the raw amino-acid sequence, 410 residues long: MVVQNSADAGDMRAGVQLEPFLHQVGGHMSVMKYDEHTVCKPLVSREQRFYESLPLAMKRFTPQYKGTVTVHLWKDSTGHLSLVANPVKESQEPFKVSTESAAVAIWQTLQQTTGSNGSDCTLAQWPHAQLARSPKESPAKALLRSEPHLNTPAFSLVEDTNGNQVERKSFNPWGLQCHQAHLTRLCSEYPENKRHRFLLLENVVSQYTHPCVLDLKMGTRQHGDDASEEKKARHMRKCAQSTSACLGVRICGMQVYQTDKKYFLCKDKYYGRKLSVEGFRQALYQFLHNGSHLRRELLEPILHQLRALLSVIRSQSSYRFYSSSLLVIYDGQEPPERAPGSPHPHEAPQAAHGSSPGGLTKVDIRMIDFAHTTYKGYWNEHTTYDGPDPGYIFGLENLIRILQDIQEGE.

211-219 (PCVLDLKMG) serves as a coordination point for substrate. Positions 333–358 (QEPPERAPGSPHPHEAPQAAHGSSPG) are disordered.

Belongs to the inositol phosphokinase (IPK) family. In terms of tissue distribution, detected in brain.

The protein localises to the cytoplasm. It catalyses the reaction 1D-myo-inositol hexakisphosphate + ATP = 5-diphospho-1D-myo-inositol 1,2,3,4,6-pentakisphosphate + ADP. The catalysed reaction is 1-diphospho-1D-myo-inositol 2,3,4,5,6-pentakisphosphate + ATP + H(+) = 1,5-bis(diphospho)-1D-myo-inositol 2,3,4,6-tetrakisphosphate + ADP. In terms of biological role, converts inositol hexakisphosphate (InsP6) to diphosphoinositol pentakisphosphate (InsP7/PP-InsP5). Converts 1,3,4,5,6-pentakisphosphate (InsP5) to PP-InsP4. This is Inositol hexakisphosphate kinase 3 (IP6K3) from Homo sapiens (Human).